The chain runs to 488 residues: Homoserine O-acetyltransferase (488 aa).

Positions 47–355 (NAILVCHALT…SYGHDAFLLE (309 aa)) constitute an AB hydrolase-1 domain. Serine 153 acts as the Nucleophile in catalysis. Residue arginine 222 coordinates substrate. Residues aspartate 316 and histidine 349 contribute to the active site. Aspartate 350 provides a ligand contact to substrate. 2 consecutive CBS domains span residues 376 to 433 (MTEK…CSKL) and 437 to 488 (MTRD…RLIG).

Belongs to the AB hydrolase superfamily. MetX family. Homodimer.

It localises to the cytoplasm. The catalysed reaction is L-homoserine + acetyl-CoA = O-acetyl-L-homoserine + CoA. The protein operates within amino-acid biosynthesis; L-methionine biosynthesis via de novo pathway; O-acetyl-L-homoserine from L-homoserine: step 1/1. Functionally, transfers an acetyl group from acetyl-CoA to L-homoserine, forming acetyl-L-homoserine. This chain is Homoserine O-acetyltransferase, found in Methanococcoides burtonii (strain DSM 6242 / NBRC 107633 / OCM 468 / ACE-M).